We begin with the raw amino-acid sequence, 306 residues long: D-alanine--D-alanine ligase (306 aa).

Positions 104–303 (KMLWKAFGLP…FEQLVVKILE (200 aa)) constitute an ATP-grasp domain. 134 to 189 (VAKLGLPLMVKPSLEGSSVGLTKVKAVEELKSAVEYALKFDNTILIEEWLAGDELT) is a binding site for ATP. Asp257, Glu270, and Asn272 together coordinate Mg(2+).

Belongs to the D-alanine--D-alanine ligase family. Mg(2+) is required as a cofactor. The cofactor is Mn(2+).

It is found in the cytoplasm. The catalysed reaction is 2 D-alanine + ATP = D-alanyl-D-alanine + ADP + phosphate + H(+). It participates in cell wall biogenesis; peptidoglycan biosynthesis. Its function is as follows. Cell wall formation. The polypeptide is D-alanine--D-alanine ligase (Haemophilus influenzae (strain 86-028NP)).